Reading from the N-terminus, the 277-residue chain is Undecaprenyl-diphosphatase (277 aa).

The next 5 helical transmembrane spans lie at 83–103 (FALN…VFAS), 109–129 (LFAP…ILWI), 188–208 (ATEF…VYSV), 218–238 (ADIP…FLCV), and 256–276 (YRIV…VVWA).

It belongs to the UppP family.

It localises to the cell inner membrane. The enzyme catalyses di-trans,octa-cis-undecaprenyl diphosphate + H2O = di-trans,octa-cis-undecaprenyl phosphate + phosphate + H(+). In terms of biological role, catalyzes the dephosphorylation of undecaprenyl diphosphate (UPP). Confers resistance to bacitracin. In Janthinobacterium sp. (strain Marseille) (Minibacterium massiliensis), this protein is Undecaprenyl-diphosphatase.